The chain runs to 258 residues: Acetylglutamate kinase (258 aa).

Residues 44–45, arginine 66, and asparagine 158 each bind substrate; that span reads GG. Residues 181–186 and 209–211 each bind ATP; these read DVSGIL and IIT.

It belongs to the acetylglutamate kinase family. ArgB subfamily. In terms of assembly, homodimer.

It localises to the cytoplasm. It carries out the reaction N-acetyl-L-glutamate + ATP = N-acetyl-L-glutamyl 5-phosphate + ADP. The protein operates within amino-acid biosynthesis; L-arginine biosynthesis; N(2)-acetyl-L-ornithine from L-glutamate: step 2/4. In terms of biological role, catalyzes the ATP-dependent phosphorylation of N-acetyl-L-glutamate. The sequence is that of Acetylglutamate kinase from Klebsiella pneumoniae subsp. pneumoniae (strain ATCC 700721 / MGH 78578).